A 201-amino-acid polypeptide reads, in one-letter code: MSRYRGPRFKKIRRLGALPGLTSKRPRSGSDLRNQSRFGKRSQYRIRLEEKQKLRFHYGLTERQLLRYVRIAGKAKGSTGQVLLQLLEMRLDNTLFRLGMASTIPGARQLVNHRHILVNSRIVDIPSYRCKPRDIITTRDEQRSRTLIQNHIDSSPHEELPKHLTLHSFQYKGLVNQIIDSKSIGLKINELLVVEYYSRQT.

The disordered stretch occupies residues 16 to 37 (GALPGLTSKRPRSGSDLRNQSR). The 64-residue stretch at 89–152 (MRLDNTLFRL…RSRTLIQNHI (64 aa)) folds into the S4 RNA-binding domain.

This sequence belongs to the universal ribosomal protein uS4 family. As to quaternary structure, part of the 30S ribosomal subunit. Contacts protein S5. The interaction surface between S4 and S5 is involved in control of translational fidelity.

The protein localises to the plastid. The protein resides in the chloroplast. One of the primary rRNA binding proteins, it binds directly to 16S rRNA where it nucleates assembly of the body of the 30S subunit. In terms of biological role, with S5 and S12 plays an important role in translational accuracy. This is Small ribosomal subunit protein uS4c (rps4) from Chloranthus spicatus (Chulantree).